The primary structure comprises 750 residues: GRIP and coiled-coil domain-containing protein C27D7.02c (750 aa).

Disordered regions lie at residues 14–53 and 188–280; these read AQGQEEAKNRRRQFQEEDQLRRNNKSSNKLSQNEEDAKNM and KTVE…RDIA. Basic and acidic residues-rich tracts occupy residues 18 to 34 and 188 to 198; these read EEAKNRRRQFQEEDQLR and KTVETKNDVPE. Residues 28 to 182 adopt a coiled-coil conformation; it reads QEEDQLRRNN…AQSIEQEVIS (155 aa). Positions 201 to 213 are enriched in polar residues; the sequence is RPSTDTIGVSSAL. Positions 213–243 form a coiled coil; it reads LSKKKKKRNRKNQKKKSTKQNIEATTENDAL. Over residues 214–230 the composition is skewed to basic residues; that stretch reads SKKKKKRNRKNQKKKST. A compositionally biased stretch (polar residues) spans 233–251; the sequence is NIEATTENDALSESISTPD. A compositionally biased stretch (basic and acidic residues) spans 269 to 280; sequence ADSKEEERRDIA. Positions 344 to 665 form a coiled coil; it reads KLVEELTKQL…YEHLQKSFKN (322 aa). Residues 672 to 703 form a disordered region; sequence KQQPSNHGRNSSVSRSSSSVEVNSKHPGSDDM. Positions 676–693 are enriched in low complexity; it reads SNHGRNSSVSRSSSSVEV. Basic and acidic residues predominate over residues 694-703; the sequence is NSKHPGSDDM. Residues 700-748 form the GRIP domain; that stretch reads SDDMLIDKEYTRNILFQFLEQRDRRPEIVNLLSILLDLSEEQKQKLLSV.

The protein localises to the cytoplasm. This is GRIP and coiled-coil domain-containing protein C27D7.02c from Schizosaccharomyces pombe (strain 972 / ATCC 24843) (Fission yeast).